The following is a 363-amino-acid chain: 3-isopropylmalate dehydrogenase (363 aa).

78 to 91 is a binding site for NAD(+); sequence XXXXXXXXXXXXXX. The substrate site is built by R99, R109, R138, and D227. 3 residues coordinate Mg(2+): D227, D251, and D255. Residue 285–297 participates in NAD(+) binding; it reads GSAPDIEGKNIAN.

This sequence belongs to the isocitrate and isopropylmalate dehydrogenases family. LeuB type 1 subfamily. As to quaternary structure, homodimer. Mg(2+) serves as cofactor. It depends on Mn(2+) as a cofactor.

Its subcellular location is the cytoplasm. The enzyme catalyses (2R,3S)-3-isopropylmalate + NAD(+) = 4-methyl-2-oxopentanoate + CO2 + NADH. It participates in amino-acid biosynthesis; L-leucine biosynthesis; L-leucine from 3-methyl-2-oxobutanoate: step 3/4. Catalyzes the oxidation of 3-carboxy-2-hydroxy-4-methylpentanoate (3-isopropylmalate) to 3-carboxy-4-methyl-2-oxopentanoate. The product decarboxylates to 4-methyl-2 oxopentanoate. The sequence is that of 3-isopropylmalate dehydrogenase from Buchnera aphidicola subsp. Uroleucon solidaginis.